The chain runs to 79 residues: Small ribosomal subunit protein uS17 (79 aa).

Belongs to the universal ribosomal protein uS17 family. As to quaternary structure, part of the 30S ribosomal subunit.

One of the primary rRNA binding proteins, it binds specifically to the 5'-end of 16S ribosomal RNA. The protein is Small ribosomal subunit protein uS17 of Bartonella tribocorum (strain CIP 105476 / IBS 506).